A 498-amino-acid polypeptide reads, in one-letter code: Phosphonates import ATP-binding protein PhnC (498 aa).

Residues 1–27 form a disordered region; that stretch reads MPQRPEAARAGPVAGPDAASKPAPGPA. An ABC transporter domain is found at 28-269; it reads LTLRGAGRAY…DLGELYEARR (242 aa). 60-67 serves as a coordination point for ATP; that stretch reads GPSGAGKS. Residues 270–498 form a lysR substrate binding domain region; that stretch reads GAADPARAPA…LEVARAEVPP (229 aa).

This sequence belongs to the ABC transporter superfamily. Phosphonates importer (TC 3.A.1.9.1) family. As to quaternary structure, the complex is composed of two ATP-binding proteins (PhnC), two transmembrane proteins (PhnE) and a solute-binding protein (PhnD).

Its subcellular location is the cell inner membrane. It carries out the reaction phosphonate(out) + ATP + H2O = phosphonate(in) + ADP + phosphate + H(+). Its function is as follows. Part of the ABC transporter complex PhnCDE involved in phosphonates import. Responsible for energy coupling to the transport system. The sequence is that of Phosphonates import ATP-binding protein PhnC from Anaeromyxobacter dehalogenans (strain 2CP-C).